Here is a 148-residue protein sequence, read N- to C-terminus: Large ribosomal subunit protein bL9 (148 aa).

The protein belongs to the bacterial ribosomal protein bL9 family.

In terms of biological role, binds to the 23S rRNA. This chain is Large ribosomal subunit protein bL9, found in Alkaliphilus oremlandii (strain OhILAs) (Clostridium oremlandii (strain OhILAs)).